A 528-amino-acid polypeptide reads, in one-letter code: Peptide chain release factor 3 (528 aa).

The region spanning 10–280 is the tr-type G domain; it reads AKRRTFGIIS…IDMAPAPGPR (271 aa). GTP is bound by residues 19 to 26, 87 to 91, and 141 to 144; these read SHPDAGKT, DTPGH, and NKLD.

Belongs to the TRAFAC class translation factor GTPase superfamily. Classic translation factor GTPase family. PrfC subfamily.

Its subcellular location is the cytoplasm. Functionally, increases the formation of ribosomal termination complexes and stimulates activities of RF-1 and RF-2. It binds guanine nucleotides and has strong preference for UGA stop codons. It may interact directly with the ribosome. The stimulation of RF-1 and RF-2 is significantly reduced by GTP and GDP, but not by GMP. The protein is Peptide chain release factor 3 of Desulfotalea psychrophila (strain LSv54 / DSM 12343).